A 594-amino-acid polypeptide reads, in one-letter code: UvrABC system protein C (594 aa).

One can recognise a GIY-YIG domain in the interval 15-92 (DKPGCYQMKN…IQKFQPYYNI (78 aa)). Residues 197–232 (AKIKQSLQTKMQKASEAMEFERAADIRDQIHYIEVT) form the UVR domain.

It belongs to the UvrC family. In terms of assembly, interacts with UvrB in an incision complex.

The protein resides in the cytoplasm. Its function is as follows. The UvrABC repair system catalyzes the recognition and processing of DNA lesions. UvrC both incises the 5' and 3' sides of the lesion. The N-terminal half is responsible for the 3' incision and the C-terminal half is responsible for the 5' incision. This Pediococcus pentosaceus (strain ATCC 25745 / CCUG 21536 / LMG 10740 / 183-1w) protein is UvrABC system protein C.